The sequence spans 357 residues: uncharacterized protein (357 aa).

Ser72 bears the Phosphoserine mark. 3 disordered regions span residues 79–98 (GVNE…RPSR), 264–290 (QKQL…GASV), and 323–357 (ISDE…EPLK). Residues 324 to 335 (SDEDEEDEEEDS) are compositionally biased toward acidic residues.

This is an uncharacterized protein from Saccharomyces cerevisiae (strain ATCC 204508 / S288c) (Baker's yeast).